The chain runs to 124 residues: UPF0342 protein DSY2926 (124 aa).

This sequence belongs to the UPF0342 family.

This Desulfitobacterium hafniense (strain Y51) protein is UPF0342 protein DSY2926.